We begin with the raw amino-acid sequence, 487 residues long: N-succinylglutamate 5-semialdehyde dehydrogenase (487 aa).

221–226 serves as a coordination point for NAD(+); the sequence is GSSDTG. Active-site residues include E244 and C278.

The protein belongs to the aldehyde dehydrogenase family. AstD subfamily.

It carries out the reaction N-succinyl-L-glutamate 5-semialdehyde + NAD(+) + H2O = N-succinyl-L-glutamate + NADH + 2 H(+). It participates in amino-acid degradation; L-arginine degradation via AST pathway; L-glutamate and succinate from L-arginine: step 4/5. In terms of biological role, catalyzes the NAD-dependent reduction of succinylglutamate semialdehyde into succinylglutamate. In Burkholderia mallei (strain ATCC 23344), this protein is N-succinylglutamate 5-semialdehyde dehydrogenase.